An 85-amino-acid polypeptide reads, in one-letter code: uncharacterized protein (85 aa).

2 consecutive transmembrane segments (helical) span residues 12–34 (ICLS…VLAF) and 49–71 (IPEF…NGFV).

Its subcellular location is the cell membrane. This is an uncharacterized protein from Archaeoglobus fulgidus (strain ATCC 49558 / DSM 4304 / JCM 9628 / NBRC 100126 / VC-16).